The chain runs to 545 residues: Ribulokinase (545 aa).

This sequence belongs to the ribulokinase family.

It carries out the reaction D-ribulose + ATP = D-ribulose 5-phosphate + ADP + H(+). The catalysed reaction is L-ribulose + ATP = L-ribulose 5-phosphate + ADP + H(+). It functions in the pathway carbohydrate degradation; L-arabinose degradation via L-ribulose; D-xylulose 5-phosphate from L-arabinose (bacterial route): step 2/3. This Staphylococcus aureus (strain bovine RF122 / ET3-1) protein is Ribulokinase.